The following is a 234-amino-acid chain: Adenosine 5'-phosphosulfate reductase (234 aa).

Cys-120, Cys-121, Cys-203, and Cys-206 together coordinate [4Fe-4S] cluster. Cys-229 (nucleophile; cysteine thiosulfonate intermediate) is an active-site residue.

It belongs to the PAPS reductase family. CysH subfamily. It depends on [4Fe-4S] cluster as a cofactor.

Its subcellular location is the cytoplasm. It catalyses the reaction [thioredoxin]-disulfide + sulfite + AMP + 2 H(+) = adenosine 5'-phosphosulfate + [thioredoxin]-dithiol. It participates in sulfur metabolism; hydrogen sulfide biosynthesis; sulfite from sulfate. Functionally, catalyzes the formation of sulfite from adenosine 5'-phosphosulfate (APS) using thioredoxin as an electron donor. This Bacillus mycoides (strain KBAB4) (Bacillus weihenstephanensis) protein is Adenosine 5'-phosphosulfate reductase.